Consider the following 282-residue polypeptide: Bifunctional protein FolD (282 aa).

NADP(+) contacts are provided by residues 165 to 167 and Ser-190; that span reads GRS.

Belongs to the tetrahydrofolate dehydrogenase/cyclohydrolase family. In terms of assembly, homodimer.

It carries out the reaction (6R)-5,10-methylene-5,6,7,8-tetrahydrofolate + NADP(+) = (6R)-5,10-methenyltetrahydrofolate + NADPH. The enzyme catalyses (6R)-5,10-methenyltetrahydrofolate + H2O = (6R)-10-formyltetrahydrofolate + H(+). The protein operates within one-carbon metabolism; tetrahydrofolate interconversion. Functionally, catalyzes the oxidation of 5,10-methylenetetrahydrofolate to 5,10-methenyltetrahydrofolate and then the hydrolysis of 5,10-methenyltetrahydrofolate to 10-formyltetrahydrofolate. The protein is Bifunctional protein FolD of Acinetobacter baumannii (strain ATCC 17978 / DSM 105126 / CIP 53.77 / LMG 1025 / NCDC KC755 / 5377).